A 524-amino-acid polypeptide reads, in one-letter code: Serine/threonine-protein phosphatase 2A 56 kDa regulatory subunit gamma isoform (524 aa).

At Met-1 the chain carries N-acetylmethionine. The interval 476 to 508 (SDEARQAQKELKKDRPLVRRKSELPQDPHTEKA) is disordered.

It belongs to the phosphatase 2A regulatory subunit B56 family. PP2A consists of a common heterodimeric core enzyme, composed of PPP2CA a 36 kDa catalytic subunit (subunit C) and PPP2R1A a 65 kDa constant regulatory subunit (PR65 or subunit A), that associates with a variety of regulatory subunits. Proteins that associate with the core dimer include three families of regulatory subunits B (the R2/B/PR55/B55, R3/B''/PR72/PR130/PR59 and R5/B'/B56 families), the 48 kDa variable regulatory subunit, viral proteins, and cell signaling molecules. Interacts with SGO1. Interacts with SGO1; the interaction is direct. May interact with TP53. Interacts with IER3 and/or ERK kinases; regulates ERK dephosphorylation. Interacts with CIP2A; this interaction stabilizes CIP2A. As to expression, highest levels in heart, liver and brain. Lower levels in skeletal muscle, spleen, kidney and lung. Isoform 4 is testis-specific.

The protein localises to the nucleus. Its subcellular location is the chromosome. It localises to the centromere. In terms of biological role, the B regulatory subunit might modulate substrate selectivity and catalytic activity, and might also direct the localization of the catalytic enzyme to a particular subcellular compartment. The PP2A-PPP2R5C holoenzyme may activate TP53 and play a role in DNA damage-induced inhibition of cell proliferation. PP2A-PPP2R5C may also regulate the ERK signaling pathway through ERK dephosphorylation. The polypeptide is Serine/threonine-protein phosphatase 2A 56 kDa regulatory subunit gamma isoform (Ppp2r5c) (Mus musculus (Mouse)).